The chain runs to 380 residues: Putative ankyrin repeat protein RF_1306 (380 aa).

9 ANK repeats span residues 48–76 (NKWS…NINA), 80–109 (KCRT…KIAP), 112–143 (YGWS…KYDK), 170–199 (NNKT…KFDI), 203–233 (LGYK…GKNT), 239–268 (LEKV…GFDK), 270–299 (LGQK…DAQY), 303–333 (LGRS…DINY), and 337–366 (SGLN…YESY).

The sequence is that of Putative ankyrin repeat protein RF_1306 from Rickettsia felis (strain ATCC VR-1525 / URRWXCal2) (Rickettsia azadi).